Reading from the N-terminus, the 393-residue chain is NAD(P)H-quinone oxidoreductase subunit H, chloroplastic (393 aa).

Belongs to the complex I 49 kDa subunit family. As to quaternary structure, NDH is composed of at least 16 different subunits, 5 of which are encoded in the nucleus.

It is found in the plastid. The protein localises to the chloroplast thylakoid membrane. The enzyme catalyses a plastoquinone + NADH + (n+1) H(+)(in) = a plastoquinol + NAD(+) + n H(+)(out). It carries out the reaction a plastoquinone + NADPH + (n+1) H(+)(in) = a plastoquinol + NADP(+) + n H(+)(out). Its function is as follows. NDH shuttles electrons from NAD(P)H:plastoquinone, via FMN and iron-sulfur (Fe-S) centers, to quinones in the photosynthetic chain and possibly in a chloroplast respiratory chain. The immediate electron acceptor for the enzyme in this species is believed to be plastoquinone. Couples the redox reaction to proton translocation, and thus conserves the redox energy in a proton gradient. This Phaseolus vulgaris (Kidney bean) protein is NAD(P)H-quinone oxidoreductase subunit H, chloroplastic.